The sequence spans 107 residues: Nucleoid-associated protein NE0434 (107 aa).

Belongs to the YbaB/EbfC family. Homodimer.

It is found in the cytoplasm. The protein resides in the nucleoid. Binds to DNA and alters its conformation. May be involved in regulation of gene expression, nucleoid organization and DNA protection. This Nitrosomonas europaea (strain ATCC 19718 / CIP 103999 / KCTC 2705 / NBRC 14298) protein is Nucleoid-associated protein NE0434.